We begin with the raw amino-acid sequence, 224 residues long: Orotidine 5'-phosphate decarboxylase (224 aa).

Substrate is bound by residues aspartate 10, lysine 32, 59–68 (DLKLHDIPNT), threonine 115, arginine 175, glutamine 184, glycine 204, and arginine 205. Lysine 61 functions as the Proton donor in the catalytic mechanism.

The protein belongs to the OMP decarboxylase family. Type 1 subfamily. As to quaternary structure, homodimer.

The enzyme catalyses orotidine 5'-phosphate + H(+) = UMP + CO2. Its pathway is pyrimidine metabolism; UMP biosynthesis via de novo pathway; UMP from orotate: step 2/2. In terms of biological role, catalyzes the decarboxylation of orotidine 5'-monophosphate (OMP) to uridine 5'-monophosphate (UMP). The sequence is that of Orotidine 5'-phosphate decarboxylase from Novosphingobium aromaticivorans (strain ATCC 700278 / DSM 12444 / CCUG 56034 / CIP 105152 / NBRC 16084 / F199).